Here is a 301-residue protein sequence, read N- to C-terminus: Thyroxine 5-deiodinase (301 aa).

The Cytoplasmic segment spans residues 1–41; it reads MSRQAAPRWVVGEGRGTLGGAATMLRSLLLHSLRLCSQTAS. A helical; Signal-anchor for type II membrane protein membrane pass occupies residues 42–64; sequence CLVLFPRFLGTAFMLWLLDFLCI. At 65–301 the chain is on the extracellular side; the sequence is RKHLLGRRRR…QLHGPQPRRV (237 aa). U167 is a catalytic residue. U167 is a non-standard amino acid (selenocysteine).

Belongs to the iodothyronine deiodinase family. In terms of assembly, monomer. Homodimer. May undergo minor heretodimerization with DIO1 and DIO2. In terms of tissue distribution, highly expressed in mammary gland. Detected at lower levels in kidney, and at very low levels in the other tissues.

It localises to the cell membrane. It is found in the endosome membrane. It carries out the reaction 3,3',5'-triiodo-L-thyronine + iodide + A + H(+) = L-thyroxine + AH2. The catalysed reaction is 3,3'-diiodo-L-thyronine + iodide + A + H(+) = 3,3',5-triiodo-L-thyronine + AH2. It catalyses the reaction 3-iodo-L-thyronine + iodide + A + H(+) = 3,5-diiodo-L-thyronine + AH2. The enzyme catalyses L-thyronine + iodide + A + H(+) = 3-iodo-L-thyronine + AH2. It carries out the reaction 3',5'-diiodo-L-thyronine + iodide + A + H(+) = 3,3',5'-triiodo-L-thyronine + AH2. The catalysed reaction is 3'-iodo-L-thyronine + iodide + A + H(+) = 3,3'-diiodo-L-thyronine + AH2. It catalyses the reaction 3,3',5'-triiodothyronamine + iodide + A + H(+) = 3,3',5,5'-tetraiodothyronamine + AH2. The enzyme catalyses 3',5'-diiodothyronamine + iodide + A + H(+) = 3,3',5'-triiodothyronamine + AH2. It carries out the reaction 3,3'-diiodothyronamine + iodide + A + H(+) = 3,3',5-triiodothyronamine + AH2. The catalysed reaction is 3-iodothyronamine + iodide + A + H(+) = 3,5-diiodothyronamine + AH2. It catalyses the reaction 3'-iodothyronamine + iodide + A + H(+) = 3,3'-diiodothyronamine + AH2. The enzyme catalyses thyronamine + iodide + A + H(+) = 3-iodothyronamine + AH2. Functionally, plays a crucial role in the metabolism of thyroid hormones (TH) and has specific roles in TH activation and inactivation by deiodination. Catalyzes the deiodination of L-thyroxine (T4) to 3,3',5'-triiodothyronine (rT3), 3,5,3'-triiodothyronine (T3) to 3,3'-diiodothyronine (3,3'-T2), 3,5-diiodothyronine (3,5-T2) to 3-monoiodothyronine (3-T1), rT3 to 3',5'-diiodothyronine (3',5'-T2) and 3,3'-T2 to 3'-monoiodothyronine (3'-T1) via inner-ring deiodination (IRD). Catalyzes the deiodination of 3-T1 to L-thyronine (T0) via outer-ring deiodination (ORD). Catalyzes the tyrosyl ring deiodinations of 3,3',5,5'-tetraiodothyronamine, 3,3',5'-triiodothyronamine, 3,5,3'-triiodothyronamine, 3,5-diiodothyronamine, 3,3'-diiodothyronamine and 3-iodothyronamine. The protein is Thyroxine 5-deiodinase (DIO3) of Bos taurus (Bovine).